A 122-amino-acid chain; its full sequence is Large ribosomal subunit protein uL14c (122 aa).

It belongs to the universal ribosomal protein uL14 family. Part of the 50S ribosomal subunit.

It is found in the plastid. The protein localises to the chloroplast. Functionally, binds to 23S rRNA. This chain is Large ribosomal subunit protein uL14c, found in Welwitschia mirabilis (Tree tumbo).